The following is a 239-amino-acid chain: Demethylmenaquinone methyltransferase (239 aa).

Residues Thr-60, Asp-81, and 106-107 (DA) each bind S-adenosyl-L-methionine.

It belongs to the class I-like SAM-binding methyltransferase superfamily. MenG/UbiE family.

It catalyses the reaction a 2-demethylmenaquinol + S-adenosyl-L-methionine = a menaquinol + S-adenosyl-L-homocysteine + H(+). The protein operates within quinol/quinone metabolism; menaquinone biosynthesis; menaquinol from 1,4-dihydroxy-2-naphthoate: step 2/2. Methyltransferase required for the conversion of demethylmenaquinol (DMKH2) to menaquinol (MKH2). The polypeptide is Demethylmenaquinone methyltransferase (Staphylococcus haemolyticus (strain JCSC1435)).